We begin with the raw amino-acid sequence, 312 residues long: tRNA uridine(34) hydroxylase (312 aa).

The region spanning Ser124–Thr218 is the Rhodanese domain. Catalysis depends on Cys178, which acts as the Cysteine persulfide intermediate. Composition is skewed to basic and acidic residues over residues Thr279–Arg294 and Ile302–Ala312. A disordered region spans residues Thr279 to Ala312.

It belongs to the TrhO family.

The enzyme catalyses uridine(34) in tRNA + AH2 + O2 = 5-hydroxyuridine(34) in tRNA + A + H2O. Functionally, catalyzes oxygen-dependent 5-hydroxyuridine (ho5U) modification at position 34 in tRNAs. This chain is tRNA uridine(34) hydroxylase, found in Ectopseudomonas mendocina (strain ymp) (Pseudomonas mendocina).